A 2479-amino-acid chain; its full sequence is Centrosomal protein of 290 kDa (2479 aa).

A self-association (with itself or C-terminus) region spans residues 1 to 695; it reads MPPNINWKEI…IESKNAEGIF (695 aa). 7 coiled-coil regions span residues 59-565, 598-664, 697-931, 958-1027, 1071-1498, 1533-1584, and 1635-2452; these read MKMK…ERGK, SLKN…MQKD, ASLH…VCEK, SLSE…IEQA, QRAE…ILSR, HTLK…LHIL, and DSLS…SEQL. The span at 149–163 shows a compositional bias: basic and acidic residues; the sequence is ALRNEEAENENSKLR. The tract at residues 149–168 is disordered; sequence ALRNEEAENENSKLRRENKR. Residues 696–896 form an interaction with IQCB1 region; that stretch reads DASLHLKAQV…TVLQVNEKSL (201 aa). The interval 1966–2479 is self-association (with itself or N-terminus); it reads TTGMTVDQVL…EESPVNFPIY (514 aa). The segment at 2458 to 2479 is disordered; sequence SPVAASEEFEDEEESPVNFPIY.

Part of the tectonic-like complex (also named B9 complex). Interacts with ATF4 via its N-terminal region. Associates with the BBSome complex, interacting (via N-terminus) with BBS4. Interacts with IQCB1/NPHP5; IQCB1 and CEP290/NPHP6 are proposed to form a functional NPHP5-6 module localized to the centrosome. Interacts with NPHP4; the interaction likely requires additional interactors. Interacts with ZNF423, FAM161A, CEP162, CEP162, CEP131, TALPID3, CCDC13, CC2D2A, RPGRIP1. Can self-associate (homo- or heteromeric). Interacts with CCP110; required for suppressing cilia formation. Interacts with RPGR. Associates (via C-terminus) with microtubules; association to microtubule is reduced in response to cellular stress, such as ultraviolet light (UV) radiation or heat shock, in a process that requires p38 MAP kinase signaling. Interacts with FAM161A. Interacts with PCM1. Interacts with CCDC66. Interacts with ARMC9 and CSPP1. Post-translationally, ubiquitinated. May undergo monoubiquitination; monoubiquitination is inhibited in response to cellular stress, such as ultraviolet light (UV) radiation or heat shock, but does not cause its displacement from centriolar satellites. As to expression, ubiquitous. Expressed strongly in placenta and weakly in brain.

The protein localises to the cytoplasm. Its subcellular location is the cytoskeleton. The protein resides in the microtubule organizing center. It is found in the centrosome. It localises to the centriolar satellite. The protein localises to the nucleus. Its subcellular location is the cell projection. The protein resides in the cilium. It is found in the cilium basal body. It localises to the centriole. The protein localises to the cytoplasmic vesicle. Its function is as follows. Involved in early and late steps in cilia formation. Its association with CCP110 is required for inhibition of primary cilia formation by CCP110. May play a role in early ciliogenesis in the disappearance of centriolar satellites and in the transition of primary ciliar vesicles (PCVs) to capped ciliary vesicles (CCVs). Required for the centrosomal recruitment of RAB8A and for the targeting of centriole satellite proteins to centrosomes such as of PCM1. Required for the correct localization of ciliary and phototransduction proteins in retinal photoreceptor cells; may play a role in ciliary transport processes. Required for efficient recruitment of RAB8A to primary cilium. In the ciliary transition zone is part of the tectonic-like complex which is required for tissue-specific ciliogenesis and may regulate ciliary membrane composition. Involved in regulation of the BBSome complex integrity, specifically for presence of BBS2, BBS5 and BBS8/TTC8 in the complex, and in ciliary targeting of selected BBSome cargos. May play a role in controlling entry of the BBSome complex to cilia possibly implicating IQCB1/NPHP5. Activates ATF4-mediated transcription. The polypeptide is Centrosomal protein of 290 kDa (CEP290) (Homo sapiens (Human)).